The following is a 375-amino-acid chain: N5-carboxyaminoimidazole ribonucleotide synthase (375 aa).

Residues arginine 108, lysine 148, 153 to 159 (GYDGKGQ), 183 to 186 (EQYL), glutamate 191, histidine 214, and 266 to 267 (NE) each bind ATP. The ATP-grasp domain occupies 112 to 296 (KQTLLEANTQ…QFDTHILAIT (185 aa)).

It belongs to the PurK/PurT family. As to quaternary structure, homodimer.

The catalysed reaction is 5-amino-1-(5-phospho-beta-D-ribosyl)imidazole + hydrogencarbonate + ATP = 5-carboxyamino-1-(5-phospho-D-ribosyl)imidazole + ADP + phosphate + 2 H(+). It participates in purine metabolism; IMP biosynthesis via de novo pathway; 5-amino-1-(5-phospho-D-ribosyl)imidazole-4-carboxylate from 5-amino-1-(5-phospho-D-ribosyl)imidazole (N5-CAIR route): step 1/2. Its function is as follows. Catalyzes the ATP-dependent conversion of 5-aminoimidazole ribonucleotide (AIR) and HCO(3)(-) to N5-carboxyaminoimidazole ribonucleotide (N5-CAIR). This chain is N5-carboxyaminoimidazole ribonucleotide synthase, found in Staphylococcus epidermidis (strain ATCC 35984 / DSM 28319 / BCRC 17069 / CCUG 31568 / BM 3577 / RP62A).